A 317-amino-acid chain; its full sequence is L-lactate dehydrogenase (317 aa).

NAD(+) is bound by residues Val-16, Asp-37, Lys-42, Tyr-68, and 82–83; that span reads GA. The substrate site is built by Gln-85 and Arg-91. NAD(+)-binding positions include Thr-104, 121–123, and Ser-146; that span reads ATN. Residue 123–126 participates in substrate binding; sequence NPVD. 151–154 is a binding site for substrate; the sequence is DTAR. Arg-156 and His-171 together coordinate beta-D-fructose 1,6-bisphosphate. The active-site Proton acceptor is the His-178. Tyr-222 carries the post-translational modification Phosphotyrosine. Thr-231 provides a ligand contact to substrate.

The protein belongs to the LDH/MDH superfamily. LDH family. Homotetramer.

The protein resides in the cytoplasm. It carries out the reaction (S)-lactate + NAD(+) = pyruvate + NADH + H(+). Its pathway is fermentation; pyruvate fermentation to lactate; (S)-lactate from pyruvate: step 1/1. Allosterically activated by fructose 1,6-bisphosphate (FBP). Catalyzes the conversion of lactate to pyruvate. This chain is L-lactate dehydrogenase, found in Corynebacterium efficiens (strain DSM 44549 / YS-314 / AJ 12310 / JCM 11189 / NBRC 100395).